The chain runs to 304 residues: Probable aquaporin NIP5-1 (304 aa).

2 helical membrane-spanning segments follow: residues 80–100 and 106–126; these read LGAE…GPIV and GAET…IIIL. An NPA 1 motif is present at residues 137–139; that stretch reads NPS. The next 3 helical transmembrane spans lie at 157–177, 195–215, and 219–239; these read AYIA…KGVF, AFAL…AVAT, and AVGE…ILVA. The short motif at 248–250 is the NPA 2 element; that stretch reads NPV. Residues 266–286 traverse the membrane as a helical segment; the sequence is WVYLVAPTLGAISGAAVYTGV. Phosphoserine is present on Ser-301.

The protein belongs to the MIP/aquaporin (TC 1.A.8) family. NIP (TC 1.A.8.12) subfamily. Expressed in rosette leaves.

Its subcellular location is the cell membrane. Boric acid transporter. Low water transport activity. Plays an important role as plasma membrane boric acid channel for the boron uptake required for plant growth and development under boron limitation. This is Probable aquaporin NIP5-1 (NIP5-1) from Arabidopsis thaliana (Mouse-ear cress).